Consider the following 171-residue polypeptide: Lipoprotein signal peptidase (171 aa).

A run of 3 helical transmembrane segments spans residues 7–27 (GLLALVLTLILDQATKLGLYF), 64–84 (IGRWLLVALSLAAAIGLGLWM), and 88–108 (TSRLLGIALGLIVGGALGNAI). Active-site residues include aspartate 118 and aspartate 136. Residues 128-148 (SWYVFNVADAAIVAGVIGLIL) traverse the membrane as a helical segment.

It belongs to the peptidase A8 family.

It is found in the cell inner membrane. The catalysed reaction is Release of signal peptides from bacterial membrane prolipoproteins. Hydrolyzes -Xaa-Yaa-Zaa-|-(S,diacylglyceryl)Cys-, in which Xaa is hydrophobic (preferably Leu), and Yaa (Ala or Ser) and Zaa (Gly or Ala) have small, neutral side chains.. It participates in protein modification; lipoprotein biosynthesis (signal peptide cleavage). In terms of biological role, this protein specifically catalyzes the removal of signal peptides from prolipoproteins. This Methylobacterium radiotolerans (strain ATCC 27329 / DSM 1819 / JCM 2831 / NBRC 15690 / NCIMB 10815 / 0-1) protein is Lipoprotein signal peptidase.